A 110-amino-acid chain; its full sequence is UPF0122 protein lin1916 (110 aa).

It belongs to the UPF0122 family.

In terms of biological role, might take part in the signal recognition particle (SRP) pathway. This is inferred from the conservation of its genetic proximity to ftsY/ffh. May be a regulatory protein. The polypeptide is UPF0122 protein lin1916 (Listeria innocua serovar 6a (strain ATCC BAA-680 / CLIP 11262)).